A 538-amino-acid polypeptide reads, in one-letter code: NAD(P)H-quinone oxidoreductase chain 4 1 (538 aa).

A run of 13 helical transmembrane segments spans residues 7-27, 37-57, 88-108, 116-136, 137-157, 170-190, 210-230, 244-264, 278-298, 315-335, 336-356, 388-408, and 418-438; these read FPWL…IPII, WYGL…FWHY, LSMP…FAAW, LFYG…VAQD, LLLF…LISI, FILY…ALAF, AIEL…LPIF, SAPG…YALI, FAPV…CCAF, MGFV…GAVL, QMVS…VTYE, LALP…GIAT, and VVVV…LLSM.

It belongs to the complex I subunit 4 family.

The protein localises to the cellular thylakoid membrane. The enzyme catalyses a plastoquinone + NADH + (n+1) H(+)(in) = a plastoquinol + NAD(+) + n H(+)(out). It carries out the reaction a plastoquinone + NADPH + (n+1) H(+)(in) = a plastoquinol + NADP(+) + n H(+)(out). Functionally, NDH-1 shuttles electrons from NAD(P)H, via FMN and iron-sulfur (Fe-S) centers, to quinones in the respiratory chain. The immediate electron acceptor for the enzyme in this species is believed to be plastoquinone. Couples the redox reaction to proton translocation (for every two electrons transferred, four hydrogen ions are translocated across the cytoplasmic membrane), and thus conserves the redox energy in a proton gradient. The sequence is that of NAD(P)H-quinone oxidoreductase chain 4 1 from Nostoc sp. (strain PCC 7120 / SAG 25.82 / UTEX 2576).